The chain runs to 320 residues: Prophage side tail fiber protein homolog StfQ (320 aa).

Disordered regions lie at residues 147 to 213 (SGRA…HKSS) and 241 to 270 (TTSGSGQTRNAGKTSSDGAHTHSLSGTAAS). 2 stretches are compositionally biased toward polar residues: residues 172 to 206 (DLGTETTSSFDYGTKSTNNTGAHTHSISGTANSAG) and 241 to 258 (TTSGSGQTRNAGKTSSDG). Residues 261–270 (THSLSGTAAS) are compositionally biased toward low complexity.

The protein belongs to the tail fiber family.

The sequence is that of Prophage side tail fiber protein homolog StfQ (stfQ) from Escherichia coli (strain K12).